The following is a 333-amino-acid chain: Holliday junction branch migration complex subunit RuvB (333 aa).

The segment at 1-182 (MDERLLSGES…FGVLSRLEYY (182 aa)) is large ATPase domain (RuvB-L). Residues Leu21, Arg22, Gly63, Lys66, Thr67, Thr68, 129-131 (EDF), Arg172, Tyr182, and Arg219 contribute to the ATP site. Position 67 (Thr67) interacts with Mg(2+). A small ATPAse domain (RuvB-S) region spans residues 183 to 253 (TVDQLSAIVE…ITQMALELLQ (71 aa)). Residues 256 to 333 (KLGLDHIDHK…EHFGMEMPKV (78 aa)) form a head domain (RuvB-H) region. Arg311 and Arg316 together coordinate DNA.

The protein belongs to the RuvB family. In terms of assembly, homohexamer. Forms an RuvA(8)-RuvB(12)-Holliday junction (HJ) complex. HJ DNA is sandwiched between 2 RuvA tetramers; dsDNA enters through RuvA and exits via RuvB. An RuvB hexamer assembles on each DNA strand where it exits the tetramer. Each RuvB hexamer is contacted by two RuvA subunits (via domain III) on 2 adjacent RuvB subunits; this complex drives branch migration. In the full resolvosome a probable DNA-RuvA(4)-RuvB(12)-RuvC(2) complex forms which resolves the HJ.

Its subcellular location is the cytoplasm. The enzyme catalyses ATP + H2O = ADP + phosphate + H(+). The RuvA-RuvB-RuvC complex processes Holliday junction (HJ) DNA during genetic recombination and DNA repair, while the RuvA-RuvB complex plays an important role in the rescue of blocked DNA replication forks via replication fork reversal (RFR). RuvA specifically binds to HJ cruciform DNA, conferring on it an open structure. The RuvB hexamer acts as an ATP-dependent pump, pulling dsDNA into and through the RuvAB complex. RuvB forms 2 homohexamers on either side of HJ DNA bound by 1 or 2 RuvA tetramers; 4 subunits per hexamer contact DNA at a time. Coordinated motions by a converter formed by DNA-disengaged RuvB subunits stimulates ATP hydrolysis and nucleotide exchange. Immobilization of the converter enables RuvB to convert the ATP-contained energy into a lever motion, pulling 2 nucleotides of DNA out of the RuvA tetramer per ATP hydrolyzed, thus driving DNA branch migration. The RuvB motors rotate together with the DNA substrate, which together with the progressing nucleotide cycle form the mechanistic basis for DNA recombination by continuous HJ branch migration. Branch migration allows RuvC to scan DNA until it finds its consensus sequence, where it cleaves and resolves cruciform DNA. The protein is Holliday junction branch migration complex subunit RuvB of Bacillus anthracis (strain A0248).